The following is a 178-amino-acid chain: Acireductone dioxygenase (178 aa).

The Fe(2+) site is built by His-87, His-89, Glu-93, and His-132. 4 residues coordinate Ni(2+): His-87, His-89, Glu-93, and His-132.

It belongs to the acireductone dioxygenase (ARD) family. Fe(2+) is required as a cofactor. Ni(2+) serves as cofactor.

The protein resides in the cytoplasm. Its subcellular location is the nucleus. The enzyme catalyses 1,2-dihydroxy-5-(methylsulfanyl)pent-1-en-3-one + O2 = 4-methylsulfanyl-2-oxobutanoate + formate + 2 H(+). The catalysed reaction is 1,2-dihydroxy-5-(methylsulfanyl)pent-1-en-3-one + O2 = 3-(methylsulfanyl)propanoate + CO + formate + 2 H(+). It functions in the pathway amino-acid biosynthesis; L-methionine biosynthesis via salvage pathway; L-methionine from S-methyl-5-thio-alpha-D-ribose 1-phosphate: step 5/6. Its function is as follows. Catalyzes 2 different reactions between oxygen and the acireductone 1,2-dihydroxy-3-keto-5-methylthiopentene (DHK-MTPene) depending upon the metal bound in the active site. Fe-containing acireductone dioxygenase (Fe-ARD) produces formate and 2-keto-4-methylthiobutyrate (KMTB), the alpha-ketoacid precursor of methionine in the methionine recycle pathway. Ni-containing acireductone dioxygenase (Ni-ARD) produces methylthiopropionate, carbon monoxide and formate, and does not lie on the methionine recycle pathway. In Candida albicans (strain SC5314 / ATCC MYA-2876) (Yeast), this protein is Acireductone dioxygenase.